A 494-amino-acid polypeptide reads, in one-letter code: Probable cytosol aminopeptidase (494 aa).

Mn(2+) contacts are provided by Lys-260 and Asp-265. Lys-272 is a catalytic residue. Mn(2+) is bound by residues Asp-283, Asp-342, and Glu-344. Arg-346 is a catalytic residue.

This sequence belongs to the peptidase M17 family. It depends on Mn(2+) as a cofactor.

It localises to the cytoplasm. It catalyses the reaction Release of an N-terminal amino acid, Xaa-|-Yaa-, in which Xaa is preferably Leu, but may be other amino acids including Pro although not Arg or Lys, and Yaa may be Pro. Amino acid amides and methyl esters are also readily hydrolyzed, but rates on arylamides are exceedingly low.. The catalysed reaction is Release of an N-terminal amino acid, preferentially leucine, but not glutamic or aspartic acids.. Its function is as follows. Presumably involved in the processing and regular turnover of intracellular proteins. Catalyzes the removal of unsubstituted N-terminal amino acids from various peptides. This chain is Probable cytosol aminopeptidase, found in Bacillus anthracis (strain CDC 684 / NRRL 3495).